The following is a 294-amino-acid chain: Bifunctional protein FolD (294 aa).

NADP(+) contacts are provided by residues 175-177 and I241; that span reads GAS.

Belongs to the tetrahydrofolate dehydrogenase/cyclohydrolase family. In terms of assembly, homodimer.

The enzyme catalyses (6R)-5,10-methylene-5,6,7,8-tetrahydrofolate + NADP(+) = (6R)-5,10-methenyltetrahydrofolate + NADPH. It catalyses the reaction (6R)-5,10-methenyltetrahydrofolate + H2O = (6R)-10-formyltetrahydrofolate + H(+). The protein operates within one-carbon metabolism; tetrahydrofolate interconversion. Its function is as follows. Catalyzes the oxidation of 5,10-methylenetetrahydrofolate to 5,10-methenyltetrahydrofolate and then the hydrolysis of 5,10-methenyltetrahydrofolate to 10-formyltetrahydrofolate. This chain is Bifunctional protein FolD, found in Hahella chejuensis (strain KCTC 2396).